The sequence spans 430 residues: Bifunctional protein GlmU (430 aa).

Positions Met1–Lys223 are pyrophosphorylase. UDP-N-acetyl-alpha-D-glucosamine is bound by residues Leu8–Gly11, Lys22, and Gly81–Thr82. Asp102 serves as a coordination point for Mg(2+). Gly135, Glu149, Asn164, and Asn221 together coordinate UDP-N-acetyl-alpha-D-glucosamine. Residue Asn221 coordinates Mg(2+). The linker stretch occupies residues Tyr224–Gln244. An N-acetyltransferase region spans residues Gly245–Asn430. 2 residues coordinate UDP-N-acetyl-alpha-D-glucosamine: Arg308 and Lys325. His336 functions as the Proton acceptor in the catalytic mechanism. Residues Tyr339 and Asn350 each coordinate UDP-N-acetyl-alpha-D-glucosamine. Residues Ala353, Asn359–Tyr360, Ser378, Ala396, and Arg413 contribute to the acetyl-CoA site.

The protein in the N-terminal section; belongs to the N-acetylglucosamine-1-phosphate uridyltransferase family. In the C-terminal section; belongs to the transferase hexapeptide repeat family. In terms of assembly, homotrimer. Mg(2+) serves as cofactor.

It is found in the cytoplasm. The enzyme catalyses alpha-D-glucosamine 1-phosphate + acetyl-CoA = N-acetyl-alpha-D-glucosamine 1-phosphate + CoA + H(+). It catalyses the reaction N-acetyl-alpha-D-glucosamine 1-phosphate + UTP + H(+) = UDP-N-acetyl-alpha-D-glucosamine + diphosphate. It functions in the pathway nucleotide-sugar biosynthesis; UDP-N-acetyl-alpha-D-glucosamine biosynthesis; N-acetyl-alpha-D-glucosamine 1-phosphate from alpha-D-glucosamine 6-phosphate (route II): step 2/2. The protein operates within nucleotide-sugar biosynthesis; UDP-N-acetyl-alpha-D-glucosamine biosynthesis; UDP-N-acetyl-alpha-D-glucosamine from N-acetyl-alpha-D-glucosamine 1-phosphate: step 1/1. Its pathway is bacterial outer membrane biogenesis; LPS lipid A biosynthesis. Its function is as follows. Catalyzes the last two sequential reactions in the de novo biosynthetic pathway for UDP-N-acetylglucosamine (UDP-GlcNAc). The C-terminal domain catalyzes the transfer of acetyl group from acetyl coenzyme A to glucosamine-1-phosphate (GlcN-1-P) to produce N-acetylglucosamine-1-phosphate (GlcNAc-1-P), which is converted into UDP-GlcNAc by the transfer of uridine 5-monophosphate (from uridine 5-triphosphate), a reaction catalyzed by the N-terminal domain. This chain is Bifunctional protein GlmU, found in Nitratiruptor sp. (strain SB155-2).